We begin with the raw amino-acid sequence, 571 residues long: MDFIRRKYLIYTVENNINFFTQELADKISNFCLNHVVAINYIIKKYHKSVLTKDIFNNTNFYIFLHFIRDCETYDIVLKSSFDVTLLYLNQLVKNYTSFTDFIDIYKQQSNTLLDDKRFLFVTKLSPYFQDIISVNFSTELNPLFHLNEPIKDLEIIYSKLFKETRFIKVDRISVLRLLIWAYSLKMDTGMKFDDNDSHDLYTILQKTGPVVSSIMTETFKEFVFPKNSTTSYWLFMKERIYNDEKVYTNEPAITIYEKVLSYIYSEIKQARVNKNMLKVVYMLDSDSEIKKFMLELIYGIPGDILSIIDERDETWKSYFVDFYHDNFIDDKTFTSANRFYDDLFNVIAKIDPEKFDIRRDIESIFRTDATLVKRFDDMKINSTYVSQMIYQTQNVDLLALENKKLCQIYNKDTEYAIKEYNTYLYLNEDNPIVIYKGELKKLSDLDLNSPSIVFSLFSKSLLKYYLDSKLASLGLIIENYKDDIILKIITGSSCLQNFTSFIVYATCNDKSILKSVVRTIINHFKVAIIILFKQFLQENIYYVNEYLDNTKHLSKNDKKFILQIINGNYD.

The protein belongs to the chordopoxvirinae E6 family.

It is found in the virion. Functionally, late protein which may play a role in the virion morphogenesis and have therefore an indirect role on viral transcription ability. The chain is Protein E6 homolog from Vertebrata (FPV).